Consider the following 311-residue polypeptide: MSFARETKEELAHIIPQKSCCQRAELGAYVKMLGDLGISNKKLKLSLKTPLSFLARKILILLKNNGFKTKTLVQDHGRLSQKNFYYIEVEEHVDELLKEYGFIDEKGNLSNRINENYIKNDCCRRSFLRGVFLAGGSLNDPAGDYHLELNLPDEAFARQVSKVLQKYHFTFRLLKRKTAPFLYLKDAEQILSFLSLIGAHQSLLKFENVRVVKEVRNQVNRLVNCETANIKKAVKTAVKQIKDIEYIAEKIGLDNLEPALKEIALLRLDNPDLSLKELGSLLTPPLTKSGVNHRFRKLELIAEKIRNGALG.

A DNA-binding region (H-T-H motif) is located at residues serine 274 to asparagine 307.

The protein belongs to the WhiA family.

Its function is as follows. Involved in cell division and chromosome segregation. The chain is Probable cell division protein WhiA from Carboxydothermus hydrogenoformans (strain ATCC BAA-161 / DSM 6008 / Z-2901).